A 231-amino-acid polypeptide reads, in one-letter code: Ninja-family protein AFP3 (231 aa).

Over residues 83–96 (AKRKRSEKQRKHKA) the composition is skewed to basic residues. Residues 83-152 (AKRKRSEKQR…SAQSQPENLG (70 aa)) form a disordered region. The span at 130–152 (QATTNKSVETSPSSAQSQPENLG) shows a compositional bias: polar residues.

Belongs to the Ninja family. In terms of assembly, forms a heterodimer with AFP2. Interacts with ABI5/DPBF1, DPBF2, AREB3/DPBF3, EEL/DPBF4, ABF1, ABF3/DPBF5 and ABF4/AREB2.

It localises to the nucleus. Its function is as follows. Acts as a negative regulator of abscisic acid (ABA) response and stress responses. In Arabidopsis thaliana (Mouse-ear cress), this protein is Ninja-family protein AFP3 (AFP3).